Consider the following 178-residue polypeptide: Bryoporin (178 aa).

Phosphocholine is bound by residues Ser51, Val83, Ser102, Pro104, and Tyr134. The segment at 101–117 (WSVPFDYNLYSNWWNIA) is trp-rich region.

Belongs to the actinoporin family. Plant subfamily.

Inhibited by sphingomyelin. Its function is as follows. Actinoporin-related protein having hemolytic activity in vitro. Binds probably a phosphocholine derivative with the unique amido or hydroxyl groups found in sphingomyelin. Involved in drought tolerance. This Physcomitrium patens (Spreading-leaved earth moss) protein is Bryoporin.